Reading from the N-terminus, the 565-residue chain is NAD-dependent malic enzyme (565 aa).

Tyr-104 functions as the Proton donor in the catalytic mechanism. Position 157 (Arg-157) interacts with NAD(+). Residue Lys-175 is the Proton acceptor of the active site. 3 residues coordinate a divalent metal cation: Glu-246, Asp-247, and Asp-270. Positions 270 and 418 each coordinate NAD(+).

Belongs to the malic enzymes family. In terms of assembly, homotetramer. Mg(2+) is required as a cofactor. It depends on Mn(2+) as a cofactor.

The catalysed reaction is (S)-malate + NAD(+) = pyruvate + CO2 + NADH. It carries out the reaction oxaloacetate + H(+) = pyruvate + CO2. The polypeptide is NAD-dependent malic enzyme (Erwinia tasmaniensis (strain DSM 17950 / CFBP 7177 / CIP 109463 / NCPPB 4357 / Et1/99)).